A 160-amino-acid chain; its full sequence is 2-C-methyl-D-erythritol 2,4-cyclodiphosphate synthase (160 aa).

Residues D12 and H14 each contribute to the a divalent metal cation site. Residues D12 to H14 and H38 to S39 each bind 4-CDP-2-C-methyl-D-erythritol 2-phosphate. H46 provides a ligand contact to a divalent metal cation. Residues D60 to G62, F65 to D69, T136 to E139, F143, and R146 each bind 4-CDP-2-C-methyl-D-erythritol 2-phosphate.

This sequence belongs to the IspF family. As to quaternary structure, homotrimer. The cofactor is a divalent metal cation.

The enzyme catalyses 4-CDP-2-C-methyl-D-erythritol 2-phosphate = 2-C-methyl-D-erythritol 2,4-cyclic diphosphate + CMP. It participates in isoprenoid biosynthesis; isopentenyl diphosphate biosynthesis via DXP pathway; isopentenyl diphosphate from 1-deoxy-D-xylulose 5-phosphate: step 4/6. Its function is as follows. Involved in the biosynthesis of isopentenyl diphosphate (IPP) and dimethylallyl diphosphate (DMAPP), two major building blocks of isoprenoid compounds. Catalyzes the conversion of 4-diphosphocytidyl-2-C-methyl-D-erythritol 2-phosphate (CDP-ME2P) to 2-C-methyl-D-erythritol 2,4-cyclodiphosphate (ME-CPP) with a corresponding release of cytidine 5-monophosphate (CMP). This is 2-C-methyl-D-erythritol 2,4-cyclodiphosphate synthase from Acinetobacter baumannii (strain AB307-0294).